The following is a 569-amino-acid chain: Matrix metalloproteinase-21 (569 aa).

The N-terminal stretch at 1 to 24 (MLAASIFRPTLLLCWLAAPWPTQP) is a signal peptide. Positions 25 to 144 (ESLFHSRDRS…GPPPRARSRR (120 aa)) are excised as a propeptide. The Cysteine switch motif lies at 115 to 122 (PRCGVPDM). The disordered stretch occupies residues 115-166 (PRCGVPDMRPPPPSAPPSPPGPPPRARSRRSPRAPLSLSRRGWQPRGYPDGG). C117 lines the Zn(2+) pocket. Residues 122-139 (MRPPPPSAPPSPPGPPPR) are compositionally biased toward pro residues. Over residues 147–156 (RAPLSLSRRG) the composition is skewed to low complexity. Residue H283 coordinates Zn(2+). E284 is a catalytic residue. The Zn(2+) site is built by H287 and H293. A disulfide bridge links C329 with C560. Hemopexin repeat units lie at residues 330 to 389 (EGSF…WPGI), 391 to 447 (THNI…FPGI), 448 to 496 (PSPL…FPAV), and 503 to 559 (FRNI…WFDV). N-linked (GlcNAc...) asparagine glycosylation occurs at N372.

Belongs to the peptidase M10A family. Zn(2+) is required as a cofactor. Ca(2+) serves as cofactor. In terms of processing, the precursor is cleaved by a furin endopeptidase. As to expression, identified in fetal brain, kidney and liver. In adult tissues found primarily in ovary, kidney, liver, lung, placenta, brain and peripheral blood leukocytes. Expressed as well in various cancer cell lines.

It localises to the secreted. Functionally, plays a specialized role in the generation of left-right asymmetry during embryogenesis. May act as a negative regulator of the NOTCH-signaling pathway. Cleaves alpha-1-antitrypsin. The sequence is that of Matrix metalloproteinase-21 (MMP21) from Homo sapiens (Human).